The chain runs to 396 residues: Elongation factor Tu 2 (396 aa).

A tr-type G domain is found at 10-206; sequence KPHINVGTIG…AMDAHIPQPE (197 aa). The interval 19-26 is G1; it reads GHVDHGKT. 19–26 is a binding site for GTP; that stretch reads GHVDHGKT. Threonine 26 is a Mg(2+) binding site. Positions 60-64 are G2; the sequence is GITIA. Residues 81–84 form a G3 region; that stretch reads DCPG. Residues 81–85 and 136–139 contribute to the GTP site; these read DCPGH and NKAD. The G4 stretch occupies residues 136-139; the sequence is NKAD. A G5 region spans residues 174–176; that stretch reads SAL.

This sequence belongs to the TRAFAC class translation factor GTPase superfamily. Classic translation factor GTPase family. EF-Tu/EF-1A subfamily. In terms of assembly, monomer.

The protein localises to the cytoplasm. The enzyme catalyses GTP + H2O = GDP + phosphate + H(+). Its function is as follows. GTP hydrolase that promotes the GTP-dependent binding of aminoacyl-tRNA to the A-site of ribosomes during protein biosynthesis. The sequence is that of Elongation factor Tu 2 from Halorhodospira halophila (strain DSM 244 / SL1) (Ectothiorhodospira halophila (strain DSM 244 / SL1)).